A 488-amino-acid chain; its full sequence is Ribulose bisphosphate carboxylase large chain (488 aa).

Substrate is bound by residues asparagine 127 and threonine 177. Lysine 179 functions as the Proton acceptor in the catalytic mechanism. Position 181 (lysine 181) interacts with substrate. The Mg(2+) site is built by lysine 205, aspartate 207, and glutamate 208. Residue lysine 205 is modified to N6-carboxylysine. Residue histidine 297 is the Proton acceptor of the active site. Arginine 298, histidine 330, and serine 382 together coordinate substrate.

The protein belongs to the RuBisCO large chain family. Type I subfamily. Heterohexadecamer of 8 large chains and 8 small chains. Requires Mg(2+) as cofactor.

It localises to the plastid. The protein resides in the chloroplast. The catalysed reaction is 2 (2R)-3-phosphoglycerate + 2 H(+) = D-ribulose 1,5-bisphosphate + CO2 + H2O. The enzyme catalyses D-ribulose 1,5-bisphosphate + O2 = 2-phosphoglycolate + (2R)-3-phosphoglycerate + 2 H(+). Its function is as follows. RuBisCO catalyzes two reactions: the carboxylation of D-ribulose 1,5-bisphosphate, the primary event in carbon dioxide fixation, as well as the oxidative fragmentation of the pentose substrate in the photorespiration process. Both reactions occur simultaneously and in competition at the same active site. In Guillardia theta (Cryptophyte), this protein is Ribulose bisphosphate carboxylase large chain.